The primary structure comprises 426 residues: Divalent metal cation transporter MntH (426 aa).

The next 10 helical transmembrane spans lie at 31-51 (WYLL…GNVA), 58-78 (AQFG…AGLV), 134-156 (ILFR…LLLM), 169-189 (VITG…FVAT), 208-228 (SVLL…VYLH), 256-276 (VILA…VAAI), 298-318 (LGAT…LASA), 337-357 (IPML…LALG), 363-383 (ALVL…LPLV), and 402-422 (TVLG…LIYL).

Belongs to the NRAMP family.

It is found in the cell membrane. H(+)-stimulated, divalent metal cation uptake system. The sequence is that of Divalent metal cation transporter MntH from Mycobacterium leprae (strain TN).